A 499-amino-acid polypeptide reads, in one-letter code: Cytochrome P450 monooxygenase notH' (499 aa).

A helical transmembrane segment spans residues 11–31 (LGLEPAGWALALLTSSIIYLF). Residues Asn-296 and Asn-427 are each glycosylated (N-linked (GlcNAc...) asparagine). Residue Cys-440 participates in heme binding.

This sequence belongs to the cytochrome P450 family. Requires heme as cofactor.

The protein localises to the membrane. It participates in alkaloid biosynthesis. Cytochrome P450 monooxygenase; part of the gene cluster that mediates the biosynthesis of notoamide, a fungal indole alkaloid that belongs to a family of natural products containing a characteristic bicyclo[2.2.2]diazaoctane core. The first step of notoamide biosynthesis involves coupling of L-proline and L-tryptophan by the bimodular NRPS notE', to produce cyclo-L-tryptophan-L-proline called brevianamide F. The reverse prenyltransferase notF' then acts as a deoxybrevianamide E synthase and converts brevianamide F to deoxybrevianamide E via reverse prenylation at C-2 of the indole ring leading to the bicyclo[2.2.2]diazaoctane core. Deoxybrevianamide E is further hydroxylated at C-6 of the indole ring, likely catalyzed by the cytochrome P450 monooxygenase notG', to yield 6-hydroxy-deoxybrevianamide E. 6-hydroxy-deoxybrevianamide E is a specific substrate of the prenyltransferase notC' for normal prenylation at C-7 to produce 6-hydroxy-7-prenyl-deoxybrevianamide, also called notoamide S. As the proposed pivotal branching point in notoamide biosynthesis, notoamide S can be diverted to notoamide E through an oxidative pyran ring closure putatively catalyzed by either notH' cytochrome P450 monooxygenase or the notD' FAD-linked oxidoreductase. This step would be followed by an indole 2,3-epoxidation-initiated pinacol-like rearrangement catalyzed by the notB' FAD-dependent monooxygenase leading to the formation of notoamide C and notoamide D. On the other hand notoamide S is converted to notoamide T by notH' (or notD'), a bifunctional oxidase that also functions as the intramolecular Diels-Alderase responsible for generation of (-)-notoamide T. To generate antipodal (+)-notoaminide T, notH (or notD) in Aspergillus strain MF297-2 is expected to catalyze a Diels-Alder reaction leading to the opposite stereochemistry. The remaining oxidoreductase notD' (or notH') likely catalyzes the oxidative pyran ring formation to yield (-)-stephacidin A. The FAD-dependent monooxygenase notI' is highly similar to notB' and is predicted to catalyze a similar conversion from (-)-stephacidin A to (+)-notoamide B via the 2,3-epoxidation of (-)-stephacidin A followed by a pinacol-type rearrangement. Finally, it remains unclear which enzyme could be responsible for the final hydroxylation steps leading to notoamide A and sclerotiamide. In Aspergillus versicolor, this protein is Cytochrome P450 monooxygenase notH'.